We begin with the raw amino-acid sequence, 638 residues long: 2-isopropylmalate synthase (638 aa).

The region spanning 72-346 is the Pyruvate carboxyltransferase domain; the sequence is PRWCSVDLRD…DPQLDLSNVP (275 aa). Mg(2+) is bound by residues D81, H285, H287, and N321. Residues 488 to 638 form a regulatory domain region; the sequence is VEQSGMTAAG…SAINRSQRQR (151 aa).

This sequence belongs to the alpha-IPM synthase/homocitrate synthase family. LeuA type 2 subfamily. As to quaternary structure, homodimer. Mg(2+) serves as cofactor.

It is found in the cytoplasm. It catalyses the reaction 3-methyl-2-oxobutanoate + acetyl-CoA + H2O = (2S)-2-isopropylmalate + CoA + H(+). It functions in the pathway amino-acid biosynthesis; L-leucine biosynthesis; L-leucine from 3-methyl-2-oxobutanoate: step 1/4. Catalyzes the condensation of the acetyl group of acetyl-CoA with 3-methyl-2-oxobutanoate (2-ketoisovalerate) to form 3-carboxy-3-hydroxy-4-methylpentanoate (2-isopropylmalate). This chain is 2-isopropylmalate synthase, found in Bifidobacterium longum subsp. infantis (strain ATCC 15697 / DSM 20088 / JCM 1222 / NCTC 11817 / S12).